We begin with the raw amino-acid sequence, 152 residues long: Transcriptional regulator MraZ (152 aa).

SpoVT-AbrB domains lie at 5 to 52 and 81 to 124; these read VNQL…PLPE and AQEL…DESL.

The protein belongs to the MraZ family. As to quaternary structure, forms oligomers.

It is found in the cytoplasm. The protein resides in the nucleoid. The chain is Transcriptional regulator MraZ from Halorhodospira halophila (strain DSM 244 / SL1) (Ectothiorhodospira halophila (strain DSM 244 / SL1)).